Here is a 71-residue protein sequence, read N- to C-terminus: Protein KleB (71 aa).

Positions 9 to 28 form a DNA-binding region, H-T-H motif; that stretch reads VTTNCRRCGKSISTLSRSLI.

In Escherichia coli, this protein is Protein KleB (kleB).